The sequence spans 189 residues: MAPLRVERAPGGSRLGVTRAQRPTALCLPPLLLLLLLLLGAVSASPESLNQSLPESQNQSHPTEDSLVSKGKMEDYETHVLPCWYEYKSCMDSVKDWCNWTLISRHYSDLQNCLEYNADKFGLGFPNPLAENIILEAHLIHFANCSLVQPTFSDPPEDVLLAMIIAPICLIPFLVTLVVWRSKDSDAQA.

The N-terminal stretch at 1–44 (MAPLRVERAPGGSRLGVTRAQRPTALCLPPLLLLLLLLLGAVSA) is a signal peptide. Over 45 to 157 (SPESLNQSLP…VQPTFSDPPE (113 aa)) the chain is Extracellular. Over residues 49 to 61 (LNQSLPESQNQSH) the composition is skewed to polar residues. A disordered region spans residues 49–69 (LNQSLPESQNQSHPTEDSLVS). Asn-50, Asn-58, Asn-99, and Asn-144 each carry an N-linked (GlcNAc...) asparagine glycan. Cystine bridges form between Cys-83–Cys-113 and Cys-98–Cys-145. A helical membrane pass occupies residues 158–179 (DVLLAMIIAPICLIPFLVTLVV). Residues 180-189 (WRSKDSDAQA) are Cytoplasmic-facing.

It belongs to the RAMP family. Heterodimer of CALCRL and RAMP2; the interaction forms the receptor complex for adrenomedullin/ADM. Heterodimer of CALCR and RAMP2; interaction forms the AMYR2 receptor complex for calcitonin/CALC and amylin/IAPP. As to expression, ubiquitous. Expressed predominantly in embryonic brain, lung and gut and in adult heart, lung, skeletal muscle and brain.

It is found in the cell membrane. In terms of biological role, accessory protein that interacts with and modulates the function of G-protein coupled receptors including calcitonin gene-related peptide type 1 receptor (CALCRL) and calcitonin receptor (CALCR). Required for the transport of CALCRL to the plasma membrane. Together with CALCRL, form a receptor complex for adrenomedullin/ADM. Together with CALCR, act as a receptor complex for calcitonin/CT/CALC. Together with CALCR, also act as a receptor complex for amylin/IAPP. The chain is Receptor activity-modifying protein 2 from Mus musculus (Mouse).